Consider the following 105-residue polypeptide: Met repressor (105 aa).

The protein belongs to the MetJ family. In terms of assembly, homodimer.

It is found in the cytoplasm. Its function is as follows. This regulatory protein, when combined with SAM (S-adenosylmethionine) represses the expression of the methionine regulon and of enzymes involved in SAM synthesis. This chain is Met repressor, found in Yersinia enterocolitica serotype O:8 / biotype 1B (strain NCTC 13174 / 8081).